Consider the following 751-residue polypeptide: Glutamate carboxypeptidase 2 (751 aa).

Topologically, residues 1–19 (MWNPLHETDSTSVAWRRPR) are cytoplasmic. Serine 10 is modified (phosphoserine). A helical; Signal-anchor for type II membrane protein membrane pass occupies residues 20 to 43 (WLCAGALVLAAGLFVLGFLFGWFI). Over 44–750 (KSPNEAANIS…QAAAGTLREV (707 aa)) the chain is Extracellular. Asparagine 51, asparagine 77, asparagine 122, asparagine 141, asparagine 154, and asparagine 196 each carry an N-linked (GlcNAc...) asparagine glycan. 2 residues coordinate substrate: arginine 211 and asparagine 258. Ca(2+) contacts are provided by threonine 270 and tyrosine 273. An NAALADase region spans residues 275 to 588 (ANEYAYRLQI…QVRGGIVFEL (314 aa)). Asparagine 337 carries N-linked (GlcNAc...) asparagine glycosylation. 2 residues coordinate Zn(2+): histidine 378 and aspartate 388. Substrate is bound at residue glutamate 425. Glutamate 425 functions as the Nucleophile; for NAALADase activity in the catalytic mechanism. A Zn(2+)-binding site is contributed by glutamate 426. Residues glutamate 434 and glutamate 437 each coordinate Ca(2+). Aspartate 454 lines the Zn(2+) pocket. N-linked (GlcNAc...) asparagine glycans are attached at residues asparagine 460 and asparagine 477. Substrate is bound by residues 518–519 (SG), asparagine 520, 535–537 (RAR), tyrosine 553, and 553–554 (YH). Histidine 554 contacts Zn(2+). An N-linked (GlcNAc...) asparagine glycan is attached at asparagine 614. Serine 629 serves as the catalytic Charge relay system. N-linked (GlcNAc...) asparagine glycosylation is found at asparagine 639 and asparagine 646. Residues aspartate 667 and histidine 690 each act as charge relay system in the active site. Residue 700–701 (KY) coordinates substrate.

This sequence belongs to the peptidase M28 family. M28B subfamily. As to quaternary structure, homodimer. Zn(2+) serves as cofactor. High expression in the duodenum and in the jejunum brush-border membrane. Weak expression in kidney.

It is found in the cell membrane. It catalyses the reaction Release of an unsubstituted, C-terminal glutamyl residue, typically from Ac-Asp-Glu or folylpoly-gamma-glutamates.. The NAALADase activity is inhibited by quisqualic acid, beta-NAAG and 2-(phosphonomethyl) pentanedioic acid (PMPA). Ethanol ingestion decreases the folate hydrolase activity by 50%. In terms of biological role, has both folate hydrolase and N-acetylated-alpha-linked-acidic dipeptidase (NAALADase) activity. Has a preference for tri-alpha-glutamate peptides. In the intestine, required for the uptake of folate. In the brain, modulates excitatory neurotransmission through the hydrolysis of the neuropeptide, N-aceylaspartylglutamate (NAAG), thereby releasing glutamate. Functionally, also exhibits a dipeptidyl-peptidase IV type activity. In vitro, cleaves Gly-Pro-AMC. The polypeptide is Glutamate carboxypeptidase 2 (FOLH1) (Sus scrofa (Pig)).